The sequence spans 1187 residues: Serine/threonine-protein kinase SIK3 homolog (1187 aa).

Positions 1 to 15 are enriched in low complexity; the sequence is MAAVSSGAAAAAGIP. The tract at residues 1 to 41 is disordered; the sequence is MAAVSSGAAAAAGIPNPNPNRERPQQQQQQQPASAALHPVA. In terms of domain architecture, Protein kinase spans 59–310; that stretch reads YEMERTIGKG…MEQICKNKWM (252 aa). Residues 65–73 and K88 each bind ATP; that span reads IGKGNFAVV. The active-site Proton acceptor is D181. Residue T214 is modified to Phosphothreonine. At S218 the chain carries Phosphoserine. The 41-residue stretch at 337 to 377 folds into the UBA domain; that stretch reads LINEQVLMAMAEMGFDRERTLQSLHADSYDHYSATYSLLSD. 3 disordered regions span residues 548 to 587, 697 to 776, and 1060 to 1092; these read LKRP…VQRS, IQPS…PPGS, and CADA…GALQ. Residues 570–581 show a composition bias toward acidic residues; that stretch reads VDEEGSDAEPDP. Polar residues predominate over residues 739-749; sequence VQYQHGSALYQ.

This sequence belongs to the protein kinase superfamily. CAMK Ser/Thr protein kinase family. SNF1 subfamily. Mg(2+) is required as a cofactor.

The catalysed reaction is L-seryl-[protein] + ATP = O-phospho-L-seryl-[protein] + ADP + H(+). The enzyme catalyses L-threonyl-[protein] + ATP = O-phospho-L-threonyl-[protein] + ADP + H(+). This Danio rerio (Zebrafish) protein is Serine/threonine-protein kinase SIK3 homolog.